The chain runs to 297 residues: CASP-like protein 4A2 (297 aa).

Residues 1 to 20 (MKMKRTASSNSEAQSYNESP) show a composition bias toward polar residues. The tract at residues 1–135 (MKMKRTASSN…PINGEESTRT (135 aa)) is disordered. Over 1–149 (MKMKRTASSN…ARGDDLVSLT (149 aa)) the chain is Cytoplasmic. Residues 69-83 (LPSPIPPPPPQFPPP) show a composition bias toward pro residues. The chain crosses the membrane as a helical span at residues 150 to 170 (ALGFRITEVILCVISFSIMAA). Topologically, residues 171–191 (DKTQGWSGDSYDRYKEYRYCL) are extracellular. Residues 192 to 212 (AVNVIAFVYSAFEACDAACYI) traverse the membrane as a helical segment. The Cytoplasmic portion of the chain corresponds to 213–225 (AKESYMINCGFHD). A helical transmembrane segment spans residues 226–246 (LFVFSMDQLLAYLLMSASSCA). Topologically, residues 247–265 (ATRVDDWVSNWGKDEFTQM) are extracellular. A helical transmembrane segment spans residues 266–286 (ATASIAVSFLAFGAFAVSALI). The Cytoplasmic segment spans residues 287 to 297 (SSYRLFTHASS).

It belongs to the Casparian strip membrane proteins (CASP) family. In terms of assembly, homodimer and heterodimers.

The protein localises to the cell membrane. The polypeptide is CASP-like protein 4A2 (Arabidopsis thaliana (Mouse-ear cress)).